The sequence spans 219 residues: Small ribosomal subunit protein uS3c (219 aa).

The 72-residue stretch at 47-118 (IRNHVRNSSN…KLRMTLVEVL (72 aa)) folds into the KH type-2 domain.

Belongs to the universal ribosomal protein uS3 family. In terms of assembly, part of the 30S ribosomal subunit.

Its subcellular location is the plastid. The protein resides in the chloroplast. The sequence is that of Small ribosomal subunit protein uS3c (rps3) from Chara vulgaris (Common stonewort).